A 224-amino-acid polypeptide reads, in one-letter code: Cell division protein SepF (224 aa).

Residues D21–G78 are disordered. A compositionally biased stretch (basic and acidic residues) spans Y54–D66.

The protein belongs to the SepF family. As to quaternary structure, homodimer. Interacts with FtsZ.

Its subcellular location is the cytoplasm. Cell division protein that is part of the divisome complex and is recruited early to the Z-ring. Probably stimulates Z-ring formation, perhaps through the cross-linking of FtsZ protofilaments. Its function overlaps with FtsA. The protein is Cell division protein SepF of Mycolicibacterium gilvum (strain PYR-GCK) (Mycobacterium gilvum (strain PYR-GCK)).